Consider the following 671-residue polypeptide: Acetyl-coenzyme A synthetase 1 (671 aa).

Residues 210–213 and Thr-329 contribute to the CoA site; that span reads RGGK. ATP-binding positions include 405–407, 429–434, Asp-520, and Arg-535; these read GEP and DTYWQT. Ser-543 lines the CoA pocket. Position 546 (Arg-546) interacts with ATP. Arg-605 is a CoA binding site.

The protein belongs to the ATP-dependent AMP-binding enzyme family.

It carries out the reaction acetate + ATP + CoA = acetyl-CoA + AMP + diphosphate. This is Acetyl-coenzyme A synthetase 1 (ACS1) from Debaryomyces hansenii (strain ATCC 36239 / CBS 767 / BCRC 21394 / JCM 1990 / NBRC 0083 / IGC 2968) (Yeast).